The primary structure comprises 129 residues: Small ribosomal subunit protein uS8 (129 aa).

This sequence belongs to the universal ribosomal protein uS8 family. In terms of assembly, part of the 30S ribosomal subunit. Contacts proteins S5 and S12.

One of the primary rRNA binding proteins, it binds directly to 16S rRNA central domain where it helps coordinate assembly of the platform of the 30S subunit. The sequence is that of Small ribosomal subunit protein uS8 from Spiroplasma kunkelii.